We begin with the raw amino-acid sequence, 1076 residues long: Carbamoyl phosphate synthase large chain (1076 aa).

Residues 1-403 (MPKRTDIQSI…SLQKALRGLE (403 aa)) form a carboxyphosphate synthetic domain region. Residues R129, R169, G175, G176, E208, L210, E215, G241, V242, H243, Q285, and E299 each coordinate ATP. Positions 133 to 328 (DQAMKRIGLE…IAKIAAKLAV (196 aa)) constitute an ATP-grasp 1 domain. Q285, E299, and N301 together coordinate Mg(2+). Q285, E299, and N301 together coordinate Mn(2+). Residues 404 to 553 (TGNDGLDPKV…YSSYEEECEA (150 aa)) form an oligomerization domain region. A carbamoyl phosphate synthetic domain region spans residues 554-935 (EVSDRPKIMV…AFYKAQLGAG (382 aa)). An ATP-grasp 2 domain is found at 678 to 869 (QHMVDKLGLK…LAQVAARCMA (192 aa)). Positions 714, 753, 755, 760, 785, 786, 787, 788, 828, and 840 each coordinate ATP. The Mg(2+) site is built by Q828, E840, and N842. Positions 828, 840, and 842 each coordinate Mn(2+). One can recognise an MGS-like domain in the interval 936-1076 (EAIPALEGER…LQELHAGVSQ (141 aa)). Positions 936–1076 (EAIPALEGER…LQELHAGVSQ (141 aa)) are allosteric domain.

Belongs to the CarB family. In terms of assembly, composed of two chains; the small (or glutamine) chain promotes the hydrolysis of glutamine to ammonia, which is used by the large (or ammonia) chain to synthesize carbamoyl phosphate. Tetramer of heterodimers (alpha,beta)4. Requires Mg(2+) as cofactor. Mn(2+) is required as a cofactor.

It carries out the reaction hydrogencarbonate + L-glutamine + 2 ATP + H2O = carbamoyl phosphate + L-glutamate + 2 ADP + phosphate + 2 H(+). The catalysed reaction is hydrogencarbonate + NH4(+) + 2 ATP = carbamoyl phosphate + 2 ADP + phosphate + 2 H(+). The protein operates within amino-acid biosynthesis; L-arginine biosynthesis; carbamoyl phosphate from bicarbonate: step 1/1. Its pathway is pyrimidine metabolism; UMP biosynthesis via de novo pathway; (S)-dihydroorotate from bicarbonate: step 1/3. Its function is as follows. Large subunit of the glutamine-dependent carbamoyl phosphate synthetase (CPSase). CPSase catalyzes the formation of carbamoyl phosphate from the ammonia moiety of glutamine, carbonate, and phosphate donated by ATP, constituting the first step of 2 biosynthetic pathways, one leading to arginine and/or urea and the other to pyrimidine nucleotides. The large subunit (synthetase) binds the substrates ammonia (free or transferred from glutamine from the small subunit), hydrogencarbonate and ATP and carries out an ATP-coupled ligase reaction, activating hydrogencarbonate by forming carboxy phosphate which reacts with ammonia to form carbamoyl phosphate. This Halomonas eurihalina protein is Carbamoyl phosphate synthase large chain.